A 193-amino-acid polypeptide reads, in one-letter code: Phosphoheptose isomerase (193 aa).

Residues 37–193 (LADSFKAGGK…QLIEKEMVKA (157 aa)) enclose the SIS domain. A substrate-binding site is contributed by 52 to 54 (NGG). Residues histidine 61 and glutamate 65 each contribute to the Zn(2+) site. Substrate is bound by residues glutamate 65, 93–94 (ND), 119–121 (STS), serine 124, and glutamine 172. 2 residues coordinate Zn(2+): glutamine 172 and histidine 180.

The protein belongs to the SIS family. GmhA subfamily. In terms of assembly, homotetramer. Requires Zn(2+) as cofactor.

The protein resides in the cytoplasm. It catalyses the reaction 2 D-sedoheptulose 7-phosphate = D-glycero-alpha-D-manno-heptose 7-phosphate + D-glycero-beta-D-manno-heptose 7-phosphate. It functions in the pathway carbohydrate biosynthesis; D-glycero-D-manno-heptose 7-phosphate biosynthesis; D-glycero-alpha-D-manno-heptose 7-phosphate and D-glycero-beta-D-manno-heptose 7-phosphate from sedoheptulose 7-phosphate: step 1/1. In terms of biological role, catalyzes the isomerization of sedoheptulose 7-phosphate in D-glycero-D-manno-heptose 7-phosphate. In Yersinia pseudotuberculosis serotype O:1b (strain IP 31758), this protein is Phosphoheptose isomerase.